Reading from the N-terminus, the 82-residue chain is Small ribosomal subunit protein uS17 (82 aa).

It belongs to the universal ribosomal protein uS17 family. In terms of assembly, part of the 30S ribosomal subunit.

In terms of biological role, one of the primary rRNA binding proteins, it binds specifically to the 5'-end of 16S ribosomal RNA. The sequence is that of Small ribosomal subunit protein uS17 from Aeromonas hydrophila subsp. hydrophila (strain ATCC 7966 / DSM 30187 / BCRC 13018 / CCUG 14551 / JCM 1027 / KCTC 2358 / NCIMB 9240 / NCTC 8049).